We begin with the raw amino-acid sequence, 161 residues long: 2-C-methyl-D-erythritol 2,4-cyclodiphosphate synthase (161 aa).

D11 and H13 together coordinate a divalent metal cation. Residues D11 to H13 and H37 to S38 contribute to the 4-CDP-2-C-methyl-D-erythritol 2-phosphate site. Residue H45 participates in a divalent metal cation binding. 4-CDP-2-C-methyl-D-erythritol 2-phosphate is bound by residues D59–G61, T135–E138, and R145.

It belongs to the IspF family. As to quaternary structure, homotrimer. It depends on a divalent metal cation as a cofactor.

The catalysed reaction is 4-CDP-2-C-methyl-D-erythritol 2-phosphate = 2-C-methyl-D-erythritol 2,4-cyclic diphosphate + CMP. The protein operates within isoprenoid biosynthesis; isopentenyl diphosphate biosynthesis via DXP pathway; isopentenyl diphosphate from 1-deoxy-D-xylulose 5-phosphate: step 4/6. Involved in the biosynthesis of isopentenyl diphosphate (IPP) and dimethylallyl diphosphate (DMAPP), two major building blocks of isoprenoid compounds. Catalyzes the conversion of 4-diphosphocytidyl-2-C-methyl-D-erythritol 2-phosphate (CDP-ME2P) to 2-C-methyl-D-erythritol 2,4-cyclodiphosphate (ME-CPP) with a corresponding release of cytidine 5-monophosphate (CMP). This Thermosynechococcus vestitus (strain NIES-2133 / IAM M-273 / BP-1) protein is 2-C-methyl-D-erythritol 2,4-cyclodiphosphate synthase.